The chain runs to 212 residues: Phosphoenolpyruvate guanylyltransferase (212 aa).

Phosphoenolpyruvate contacts are provided by Thr139, Gly155, and Ser158.

The protein belongs to the CofC family.

It catalyses the reaction phosphoenolpyruvate + GTP + H(+) = enolpyruvoyl-2-diphospho-5'-guanosine + diphosphate. It participates in cofactor biosynthesis; coenzyme F420 biosynthesis. Its function is as follows. Guanylyltransferase that catalyzes the activation of phosphoenolpyruvate (PEP) as enolpyruvoyl-2-diphospho-5'-guanosine, via the condensation of PEP with GTP. It is involved in the biosynthesis of coenzyme F420, a hydride carrier cofactor. This is Phosphoenolpyruvate guanylyltransferase from Streptomyces coelicolor (strain ATCC BAA-471 / A3(2) / M145).